We begin with the raw amino-acid sequence, 362 residues long: Phosphoserine aminotransferase (362 aa).

Residue R42 coordinates L-glutamate. Residues A76–R77, W102, T153, D174, and Q197 contribute to the pyridoxal 5'-phosphate site. K198 is modified (N6-(pyridoxal phosphate)lysine). N239 to T240 serves as a coordination point for pyridoxal 5'-phosphate.

This sequence belongs to the class-V pyridoxal-phosphate-dependent aminotransferase family. SerC subfamily. As to quaternary structure, homodimer. The cofactor is pyridoxal 5'-phosphate.

It is found in the cytoplasm. The catalysed reaction is O-phospho-L-serine + 2-oxoglutarate = 3-phosphooxypyruvate + L-glutamate. It catalyses the reaction 4-(phosphooxy)-L-threonine + 2-oxoglutarate = (R)-3-hydroxy-2-oxo-4-phosphooxybutanoate + L-glutamate. It participates in amino-acid biosynthesis; L-serine biosynthesis; L-serine from 3-phospho-D-glycerate: step 2/3. The protein operates within cofactor biosynthesis; pyridoxine 5'-phosphate biosynthesis; pyridoxine 5'-phosphate from D-erythrose 4-phosphate: step 3/5. Functionally, catalyzes the reversible conversion of 3-phosphohydroxypyruvate to phosphoserine and of 3-hydroxy-2-oxo-4-phosphonooxybutanoate to phosphohydroxythreonine. The sequence is that of Phosphoserine aminotransferase from Proteus mirabilis (strain HI4320).